The following is a 299-amino-acid chain: dTDP-4-dehydrorhamnose reductase (299 aa).

NADH is bound by residues 10–12 (GQV), aspartate 30, 39–40 (DF), and 63–65 (AHT). 11 to 12 (QV) is an NADPH binding site. Residues 39-40 (DF), 63-65 (AHT), and tyrosine 102 contribute to the NADPH site. Position 104–105 (104–105 (TD)) interacts with dTDP-beta-L-rhamnose. NADH contacts are provided by tyrosine 128 and lysine 132. NADPH-binding residues include tyrosine 128 and lysine 132. The active-site Proton donor/acceptor is the tyrosine 128. Tryptophan 153 serves as a coordination point for dTDP-beta-L-rhamnose.

This sequence belongs to the dTDP-4-dehydrorhamnose reductase family. In terms of assembly, homodimer. It depends on Mg(2+) as a cofactor.

The catalysed reaction is dTDP-beta-L-rhamnose + NADP(+) = dTDP-4-dehydro-beta-L-rhamnose + NADPH + H(+). The protein operates within carbohydrate biosynthesis; dTDP-L-rhamnose biosynthesis. It functions in the pathway bacterial outer membrane biogenesis; LPS O-antigen biosynthesis. Its function is as follows. Involved in the biosynthesis of the dTDP-L-rhamnose which is an important component of lipopolysaccharide (LPS). Catalyzes the reduction of dTDP-6-deoxy-L-lyxo-4-hexulose to yield dTDP-L-rhamnose. RmlD uses NADH and NADPH nearly equally well. The protein is dTDP-4-dehydrorhamnose reductase of Escherichia coli (strain K12).